The primary structure comprises 344 residues: MSDNESEGPTNQTTEPVDNAWSLKIPAFKPEDNPHGLVEESSFATLFPKYREKYLKEVWPLVEQCLAEHHLKAELDLIEGSMVVKTTRKTWDPYIIIKSRDMIKLMARSVPFEQAKRVLQDDTGCDIIKIGNLVHKKEKFVKRRQRLIGPNGATLKSIELLTDCYVLVQGNTVSALGPYKGLQQVRDIVLDTMNNVHPIYNIKALMIKRELMKDPKLAGEDWSRFLPKFKNKNISKRKQPKNKKPKKEYTPFPPQQPESKIDKQLATGEYFLNKEQKQAKRQQERTAKQAEAAKKQDERRNKDFVPPTEDTPGPSRKRAAEDNKVDVQALKAKLMKANKKKERS.

One can recognise a KH domain in the interval Asp-126–Asn-194. The segment covering Lys-230–Lys-246 has biased composition (basic residues). A disordered region spans residues Lys-230 to Asp-326. Residues Phe-271–Ser-344 are a coiled coil. Residues Leu-272 to Asp-303 show a composition bias toward basic and acidic residues.

Belongs to the KRR1 family. As to quaternary structure, monomer. Component of the ribosomal small subunit (SSU) processome.

It is found in the nucleus. The protein localises to the nucleolus. Functionally, required for 40S ribosome biogenesis. Involved in nucleolar processing of pre-18S ribosomal RNA and ribosome assembly. Binds to RNA. Required for female germline development, cell viability during eye development and for survival of dividing cells and epithelial cells during early wing disk development. The chain is KRR1 small subunit processome component homolog from Drosophila mojavensis (Fruit fly).